A 363-amino-acid chain; its full sequence is UDP-N-acetylglucosamine--N-acetylmuramyl-(pentapeptide) pyrophosphoryl-undecaprenol N-acetylglucosamine transferase (363 aa).

UDP-N-acetyl-alpha-D-glucosamine is bound by residues threonine 10–glycine 12, asparagine 124, serine 195, isoleucine 250, and glutamine 295.

This sequence belongs to the glycosyltransferase 28 family. MurG subfamily.

The protein resides in the cell membrane. The catalysed reaction is di-trans,octa-cis-undecaprenyl diphospho-N-acetyl-alpha-D-muramoyl-L-alanyl-D-glutamyl-meso-2,6-diaminopimeloyl-D-alanyl-D-alanine + UDP-N-acetyl-alpha-D-glucosamine = di-trans,octa-cis-undecaprenyl diphospho-[N-acetyl-alpha-D-glucosaminyl-(1-&gt;4)]-N-acetyl-alpha-D-muramoyl-L-alanyl-D-glutamyl-meso-2,6-diaminopimeloyl-D-alanyl-D-alanine + UDP + H(+). The protein operates within cell wall biogenesis; peptidoglycan biosynthesis. Cell wall formation. Catalyzes the transfer of a GlcNAc subunit on undecaprenyl-pyrophosphoryl-MurNAc-pentapeptide (lipid intermediate I) to form undecaprenyl-pyrophosphoryl-MurNAc-(pentapeptide)GlcNAc (lipid intermediate II). In Listeria monocytogenes serovar 1/2a (strain ATCC BAA-679 / EGD-e), this protein is UDP-N-acetylglucosamine--N-acetylmuramyl-(pentapeptide) pyrophosphoryl-undecaprenol N-acetylglucosamine transferase.